Consider the following 220-residue polypeptide: Uracil-DNA glycosylase (220 aa).

Catalysis depends on Asp60, which acts as the Proton acceptor.

Belongs to the uracil-DNA glycosylase (UDG) superfamily. UNG family.

It localises to the cytoplasm. It carries out the reaction Hydrolyzes single-stranded DNA or mismatched double-stranded DNA and polynucleotides, releasing free uracil.. Functionally, excises uracil residues from the DNA which can arise as a result of misincorporation of dUMP residues by DNA polymerase or due to deamination of cytosine. The sequence is that of Uracil-DNA glycosylase from Francisella tularensis subsp. holarctica (strain FTNF002-00 / FTA).